The chain runs to 515 residues: Fatty acyl-CoA reductase 2 (515 aa).

The Cytoplasmic segment spans residues methionine 1–arginine 464. Residues asparagine 465–alanine 484 form a helical membrane-spanning segment. Residues arginine 485–valine 515 lie on the Peroxisomal side of the membrane.

This sequence belongs to the fatty acyl-CoA reductase family. Specifically expressed in the meibomian glands of the eyelid and the sebaceous glands of the skin. Also expressed in the brain where large quantities of ether lipids are synthesized.

The protein localises to the peroxisome membrane. It carries out the reaction a long-chain fatty acyl-CoA + 2 NADPH + 2 H(+) = a long-chain primary fatty alcohol + 2 NADP(+) + CoA. It catalyses the reaction hexadecanoyl-CoA + 2 NADPH + 2 H(+) = hexadecan-1-ol + 2 NADP(+) + CoA. The enzyme catalyses octadecanoyl-CoA + 2 NADPH + 2 H(+) = octadecan-1-ol + 2 NADP(+) + CoA. The catalysed reaction is a very long-chain fatty acyl-CoA + 2 NADPH + 2 H(+) = a very long-chain primary fatty alcohol + 2 NADP(+) + CoA. It carries out the reaction an ultra-long-chain fatty acyl-CoA + 2 NADPH + 2 H(+) = an ultra long-chain primary fatty alcohol + 2 NADP(+) + CoA. It catalyses the reaction eicosanoyl-CoA + 2 NADPH + 2 H(+) = eicosan-1-ol + 2 NADP(+) + CoA. The enzyme catalyses docosanoyl-CoA + 2 NADPH + 2 H(+) = docosan-1-ol + 2 NADP(+) + CoA. The catalysed reaction is tetracosanoyl-CoA + 2 NADPH + 2 H(+) = tetracosan-1-ol + 2 NADP(+) + CoA. It carries out the reaction hexacosanoyl-CoA + 2 NADPH + 2 H(+) = hexacosan-1-ol + 2 NADP(+) + CoA. It catalyses the reaction octacosanoyl-CoA + 2 NADPH + 2 H(+) = octacosan-1-ol + 2 NADP(+) + CoA. The enzyme catalyses triacontanoyl-CoA + 2 NADPH + 2 H(+) = triacontan-1-ol + 2 NADP(+) + CoA. The catalysed reaction is 18-methylnonadecanoyl-CoA + 2 NADPH + 2 H(+) = 18-methylnonadecan-1-ol + 2 NADP(+) + CoA. It carries out the reaction 20-methylheneicosanoyl-CoA + 2 NADPH + 2 H(+) = 20-methylheneicosan-1-ol + 2 NADP(+) + CoA. It catalyses the reaction 22-methyltricosanoyl-CoA + 2 NADPH + 2 H(+) = 22-methyltricosan-1-ol + 2 NADP(+) + CoA. The enzyme catalyses 24-methylpentacosanoyl-CoA + 2 NADPH + 2 H(+) = 24-methylpentacosan-1-ol + 2 NADP(+) + CoA. Functionally, catalyzes the reduction of saturated but not unsaturated C16 or C18 fatty acyl-CoA to fatty alcohols. A lower activity can be observed with shorter fatty acyl-CoA substrates. Can produce very long-chain and ultra long-chain FAls, regardless of whether they have a straight or branched chain. It may play a role in the production of ether lipids/plasmalogens and wax monoesters which synthesis requires fatty alcohols as substrates. The chain is Fatty acyl-CoA reductase 2 from Mus musculus (Mouse).